We begin with the raw amino-acid sequence, 861 residues long: MELKRGKTFIKSSLQVSHEKPPDPAAVAAAREGTGPWSVLPGGQQRPHSEKGPQASPSAQEYDRCPNKGAQLDPKGGPAALCGATFKPVRKCKTHDSMSGAGRATAATGQLVGSASFPGSPGSRRMIDYRHFVPQMPFVPAVAKSIPRKRISLKRPKKCFRNLFHIRRNKTEDLASLAAEGKSLPSPGDPSDPGGRRSKAFLPPGEGPGLDGLCQDLLDSELLADASFGLCRALCEDVASLQSFDSLTGCGEVFADESSVPSLELNEGPESPTQAAQGLESKVPRGPLQGSVEQLASPAQNEASDFTRFWDSVNRSVRQQQRALLGPWLSGPQGTDRDQSRLDTAGLAELPLCPCRDPRSGSKASSIDTGTPKSEQPESVSTSDEGYYDSFSPGLEEDKKEAESPGTPAATFPRDSYSGDALYELFHDPSEGPLGPSPDDDLCVSESLSGPALGTPLSICSFRVGAEENLAPAPGPDLLSQGFLQSSWKGKECLLKLCDTELAITMGIVSWLRRGPTPRAPPTPGQPAAPPGSQGAPRAPTEKLGGREGLASDAGGATVCSAPSRQELWAHPGTTGLLAGESKALGGATQGTGTLSRDASREEETRGHSEGLFSSMESAATSTTDTSGKNKAPVPSTWPCSQKEPGPPGVLGCFRGPWRPGHGGDTLDAEPMLAGCVARVAALKISSNEQPPAAWPPRQDMGSGLFGQRWARGPDMLEQKQSSSSPSMTTIHGLPYSASTQDQRCRDRVQDLSWLRVEPTGLGVQAWASVEDQPLQLSTEAVEQVAHGSQLDSEPRSAPAARWSSQGHHPESLGLTLNSQQEGGVSASAPECRCSLLAREGLLCGQPEVGASGPAMAEPHL.

Disordered stretches follow at residues 1–77 (MELK…PKGG), 179–206 (AEGK…PPGE), 261–289 (PSLE…GPLQ), 351–415 (PLCP…FPRD), 514–558 (RGPT…GGAT), 576–644 (GLLA…SQKE), 716–742 (MLEQ…STQD), and 786–822 (AHGS…SQQE). Residues 362 to 384 (SKASSIDTGTPKSEQPESVSTSD) are compositionally biased toward polar residues. Over residues 518 to 530 (PRAPPTPGQPAAP) the composition is skewed to pro residues. The span at 584 to 595 (ALGGATQGTGTL) shows a compositional bias: low complexity. The segment covering 598 to 609 (DASREEETRGHS) has biased composition (basic and acidic residues). Composition is skewed to polar residues over residues 615–629 (SMES…TSGK) and 719–730 (QKQSSSSPSMTT).

Belongs to the Amer family.

It localises to the cell membrane. Functionally, regulator of the canonical Wnt signaling pathway. Acts by specifically binding phosphatidylinositol 4,5-bisphosphate (PtdIns(4,5)P2), translocating to the cell membrane. In Homo sapiens (Human), this protein is APC membrane recruitment protein 3 (AMER3).